The chain runs to 175 residues: Chorismate pyruvate-lyase (175 aa).

Positions 36, 78, 116, and 157 each coordinate substrate.

Belongs to the UbiC family. Monomer.

Its subcellular location is the cytoplasm. The catalysed reaction is chorismate = 4-hydroxybenzoate + pyruvate. It functions in the pathway cofactor biosynthesis; ubiquinone biosynthesis. Removes the pyruvyl group from chorismate, with concomitant aromatization of the ring, to provide 4-hydroxybenzoate (4HB) for the ubiquinone pathway. This is Chorismate pyruvate-lyase from Hamiltonella defensa subsp. Acyrthosiphon pisum (strain 5AT).